A 77-amino-acid polypeptide reads, in one-letter code: Translation initiation factor IF-1, chloroplastic (77 aa).

One can recognise an S1-like domain in the interval 1–71 (MKEQKWIHEG…TRGRIIYRLR (71 aa)).

Belongs to the IF-1 family. Component of the 30S ribosomal translation pre-initiation complex which assembles on the 30S ribosome in the order IF-2 and IF-3, IF-1 and N-formylmethionyl-tRNA(fMet); mRNA recruitment can occur at any time during PIC assembly.

The protein localises to the plastid. Its subcellular location is the chloroplast. Its function is as follows. One of the essential components for the initiation of protein synthesis. Stabilizes the binding of IF-2 and IF-3 on the 30S subunit to which N-formylmethionyl-tRNA(fMet) subsequently binds. Helps modulate mRNA selection, yielding the 30S pre-initiation complex (PIC). Upon addition of the 50S ribosomal subunit IF-1, IF-2 and IF-3 are released leaving the mature 70S translation initiation complex. The polypeptide is Translation initiation factor IF-1, chloroplastic (Antirrhinum majus (Garden snapdragon)).